Consider the following 643-residue polypeptide: Manganese lipoxygenase (643 aa).

Positions 166 to 643 (WYTDEVFAQQ…PEQLANAIVI (478 aa)) constitute a Lipoxygenase domain. The Mn(2+) site is built by histidine 325, histidine 330, histidine 510, asparagine 514, and isoleucine 643.

This sequence belongs to the lipoxygenase family. Mn(2+) serves as cofactor.

The enzyme catalyses (9Z,12Z)-octadecadienoate + O2 = (13S)-hydroperoxy-(9Z,11E)-octadecadienoate. Its function is as follows. Lipoxygenase that metabolizes linoleic and alpha-linolenic acids to 13S-hydroperoxy fatty acids. In Pleurotus sapidus (Oyster mushroom), this protein is Manganese lipoxygenase.